The primary structure comprises 33 residues: MNLEVIAQPIVLGLIVASGPLVIVSLAARRGNL.

The helical transmembrane segment at 5 to 25 (VIAQPIVLGLIVASGPLVIVS) threads the bilayer.

It belongs to the Psb30/Ycf12 family. As to quaternary structure, PSII is composed of 1 copy each of membrane proteins PsbA, PsbB, PsbC, PsbD, PsbE, PsbF, PsbH, PsbI, PsbJ, PsbK, PsbL, PsbM, PsbT, PsbX, PsbY, PsbZ, Psb30/Ycf12, peripheral proteins of the oxygen-evolving complex and a large number of cofactors. It forms dimeric complexes.

The protein resides in the plastid membrane. A core subunit of photosystem II (PSII), probably helps stabilize the reaction center. The protein is Photosystem II reaction center protein Psb30 of Aneura mirabilis (Parasitic liverwort).